The following is a 183-amino-acid chain: UPF0725 protein At4g11700 (183 aa).

It belongs to the UPF0725 (EMB2204) family.

This Arabidopsis thaliana (Mouse-ear cress) protein is UPF0725 protein At4g11700.